Here is a 486-residue protein sequence, read N- to C-terminus: Glutamyl-tRNA(Gln) amidotransferase subunit A (486 aa).

Catalysis depends on charge relay system residues lysine 76 and serine 151. Serine 175 acts as the Acyl-ester intermediate in catalysis.

Belongs to the amidase family. GatA subfamily. As to quaternary structure, heterotrimer of A, B and C subunits.

The enzyme catalyses L-glutamyl-tRNA(Gln) + L-glutamine + ATP + H2O = L-glutaminyl-tRNA(Gln) + L-glutamate + ADP + phosphate + H(+). Functionally, allows the formation of correctly charged Gln-tRNA(Gln) through the transamidation of misacylated Glu-tRNA(Gln) in organisms which lack glutaminyl-tRNA synthetase. The reaction takes place in the presence of glutamine and ATP through an activated gamma-phospho-Glu-tRNA(Gln). This Nitrosomonas eutropha (strain DSM 101675 / C91 / Nm57) protein is Glutamyl-tRNA(Gln) amidotransferase subunit A.